The chain runs to 417 residues: 4-hydroxy-3-methylbut-2-en-1-yl diphosphate synthase (flavodoxin) (417 aa).

Positions 304, 307, 350, and 357 each coordinate [4Fe-4S] cluster.

It belongs to the IspG family. Requires [4Fe-4S] cluster as cofactor.

It catalyses the reaction (2E)-4-hydroxy-3-methylbut-2-enyl diphosphate + oxidized [flavodoxin] + H2O + 2 H(+) = 2-C-methyl-D-erythritol 2,4-cyclic diphosphate + reduced [flavodoxin]. It functions in the pathway isoprenoid biosynthesis; isopentenyl diphosphate biosynthesis via DXP pathway; isopentenyl diphosphate from 1-deoxy-D-xylulose 5-phosphate: step 5/6. Converts 2C-methyl-D-erythritol 2,4-cyclodiphosphate (ME-2,4cPP) into 1-hydroxy-2-methyl-2-(E)-butenyl 4-diphosphate. This chain is 4-hydroxy-3-methylbut-2-en-1-yl diphosphate synthase (flavodoxin), found in Sinorhizobium medicae (strain WSM419) (Ensifer medicae).